We begin with the raw amino-acid sequence, 495 residues long: F(420)H(2) dehydrogenase subunit M (495 aa).

15 helical membrane-spanning segments follow: residues 1–21, 27–47, 57–77, 80–100, 108–128, 130–150, 163–183, 215–235, 249–269, 277–297, 315–335, 338–358, 378–398, 412–432, and 450–470; these read MLPV…VTFF, LAAG…LYAY, MQFY…SVGI, VSMP…LFTW, NRFY…FVAL, FVVF…IVNL, FFIY…GLFY, IFLA…FHSW, ILFI…LPML, LMIM…ALLA, MGYV…GAMF, FSHG…QTAA, VAMM…GFIA, VFVV…LWAM, and INSI…YFGL.

This sequence belongs to the complex I subunit 4 family. As to quaternary structure, the FPO complex is composed of at least 13 different subunits. FpoA, FpoH, FpoJ, FpoK, FpoL, FpoM and FpoN proteins constitute the membrane sector of the complex.

It localises to the cell membrane. It carries out the reaction methanophenazine + reduced coenzyme F420-(gamma-L-Glu)(n) = dihydromethanophenazine + oxidized coenzyme F420-(gamma-L-Glu)(n) + H(+). Component of the F(420)H(2) dehydrogenase (FPO complex) which is part of the energy-conserving F(420)H(2):heterodisulfide oxidoreductase system. The membrane-bound electron transfer system of the complex plays an important role in the metabolism of methylotrophic methanogens when the organisms grow on methanol or methylamines. Catalyzes the oxidation of methanophenazine to dihydromethanophenazine. It shuttles electrons from F(420)H(2), via FAD and iron-sulfur (Fe-S) centers, to methanophenazine (an electron carrier in the membrane). It couples the redox reaction to proton translocation (for every two electrons transferred, two hydrogen ions are translocated across the cytoplasmic membrane), and thus conserves the redox energy in a proton gradient. It also catalyzes the oxidation of F(420)H(2) with quinones such as 2,3-dimethyl-1,4-naphthoquinone, 2-methyl-1,4-naphthoquinone and tetramethyl-p-benzoquinone. The polypeptide is F(420)H(2) dehydrogenase subunit M (fpoM) (Methanosarcina mazei (strain ATCC BAA-159 / DSM 3647 / Goe1 / Go1 / JCM 11833 / OCM 88) (Methanosarcina frisia)).